The primary structure comprises 631 residues: Phosphomethylpyrimidine synthase (631 aa).

Substrate is bound by residues asparagine 239, methionine 268, tyrosine 297, histidine 333, 353–355, 394–397, and glutamate 433; these read SRG and DGLR. Histidine 437 is a binding site for Zn(2+). Tyrosine 460 contacts substrate. Histidine 501 is a binding site for Zn(2+). Positions 581, 584, and 589 each coordinate [4Fe-4S] cluster.

This sequence belongs to the ThiC family. In terms of assembly, homodimer. The cofactor is [4Fe-4S] cluster.

It carries out the reaction 5-amino-1-(5-phospho-beta-D-ribosyl)imidazole + S-adenosyl-L-methionine = 4-amino-2-methyl-5-(phosphooxymethyl)pyrimidine + CO + 5'-deoxyadenosine + formate + L-methionine + 3 H(+). It functions in the pathway cofactor biosynthesis; thiamine diphosphate biosynthesis. Its function is as follows. Catalyzes the synthesis of the hydroxymethylpyrimidine phosphate (HMP-P) moiety of thiamine from aminoimidazole ribotide (AIR) in a radical S-adenosyl-L-methionine (SAM)-dependent reaction. This is Phosphomethylpyrimidine synthase from Escherichia coli O8 (strain IAI1).